Here is a 221-residue protein sequence, read N- to C-terminus: Ependymin-2 (221 aa).

The N-terminal stretch at 1-21 is a signal peptide; it reads MQDFAFAALSIWLCLGATALA. 3 N-linked (GlcNAc...) asparagine glycosylation sites follow: N33, N73, and N97.

The protein belongs to the ependymin family. Binds calcium through the terminal sialic acids. As to expression, EPDs are synthesized in the meninx and secreted in the cerebrospinal fluid.

Its subcellular location is the secreted. Functionally, may play a role in neural plasticity. May be involved during axon regeneration. This is Ependymin-2 (epd2) from Oncorhynchus mykiss (Rainbow trout).